The primary structure comprises 1043 residues: BAG family molecular chaperone regulator 6 (1043 aa).

5 disordered regions span residues 253-294 (KEEL…GKTV), 311-331 (DVKEAQNQKNKEEPGQVPYPI), 343-366 (VEASESKESSNEGRNLESCPSDLH), 410-500 (NIPV…AESR), and 533-566 (SVESNSNLQEESNGEIIKPCEAKENREQPAKKSF). 4 stretches are compositionally biased toward basic and acidic residues: residues 311–324 (DVKEAQNQKNKEEP), 343–357 (VEASESKESSNEGRN), 416–443 (SENHLPKPTEPTKRIAKNEPVKSTKKEQ), and 478–487 (KRMEKSKETK). Positions 534-543 (VESNSNLQEE) are enriched in polar residues. A compositionally biased stretch (basic and acidic residues) spans 550–566 (KPCEAKENREQPAKKSF). One can recognise an IQ domain in the interval 568–597 (EEEAARIIQSMYRGYDVRRWEPIKKLKEIA). The region spanning 595–672 (EIATVREQMG…SIQDKLDSLK (78 aa)) is the BAG domain. Residues 724-741 (SPEEHPMSVLNRTDEKQA) show a composition bias toward basic and acidic residues. Disordered stretches follow at residues 724–749 (SPEEHPMSVLNRTDEKQAESAAETEE), 764–799 (ATENAAAASSTTIPEKIGEVETVVPGNPPSADGNGM), 817–975 (EPIN…ISKE), and 1015–1043 (EKKLSHKKKTQIRRRASKPMSVSPTDAVL). Residues 840–852 (ASEVSEAETNSSE) are compositionally biased toward low complexity. Positions 853 to 871 (NENRKGEDDIVLHSEKNVE) are enriched in basic and acidic residues. Polar residues-rich tracts occupy residues 885-899 (QPLSQDPSSSYTREG) and 919-932 (SPNNSKGIGQQTSE). Over residues 934-951 (QDEKEQSPETEVIVKEQP) the composition is skewed to basic and acidic residues. Residues 971–1024 (GISKETKKLMEENQRFKETMETLVKAGREQLEVISKLTSRVKSLEKKLSHKKKT) are a coiled coil. Over residues 1018-1031 (LSHKKKTQIRRRAS) the composition is skewed to basic residues. A compositionally biased stretch (polar residues) spans 1034–1043 (MSVSPTDAVL).

In terms of assembly, binds to the ATPase domain of HSP70/HSC70 chaperones. Interacts with calmodulins CAM1, CAM2, CAM3, CAM4, CAM6 and CAM7. Interacts with BAGP1 and APCB1. As to expression, detected in stems, leaves, flowers and roots.

Co-chaperone that regulates diverse cellular pathways, such as programmed cell death and stress responses. Involved in plant basal resistance. Involved in basal heat response through the regulation of the heat induced small HSP (sHSP) transcriptional cascade. In terms of biological role, induces autophagy. The polypeptide is BAG family molecular chaperone regulator 6 (Arabidopsis thaliana (Mouse-ear cress)).